We begin with the raw amino-acid sequence, 878 residues long: F-box DNA helicase protein 1 (878 aa).

Positions 8–56 (SCKFYRLPLEIIPLICRFLSVQDIQSFIRVFPSFQTILDSSNDLFWKKK) constitute an F-box domain.

The protein belongs to the helicase family. UvrD subfamily. In terms of assembly, part of the E3 ubiquitin ligase Skp1-Cullin-1-F-box (SCF) complex. Interacts with skp1 and ssb1. It depends on Mg(2+) as a cofactor. The cofactor is Mn(2+).

It is found in the cytoplasm. The protein localises to the nucleus. The catalysed reaction is Couples ATP hydrolysis with the unwinding of duplex DNA by translocating in the 3'-5' direction.. The enzyme catalyses ATP + H2O = ADP + phosphate + H(+). Its pathway is protein modification; protein ubiquitination. Functionally, involved in ATP-dependent DNA-unwinding in a 3' to 5' direction, and ATP-ase activities stimulated by the single-stranded DNA-binding protein ssb1. Essential for viability and normal growth of stationary phase cells and in the absence of either srs2 or rqh1 DNA helicase. Involved in DNA recombination repair of strand breaks and stalled or collapsed replication forks, on the rhp51-dependent pathway: promotes rhp51 filament dissolution from stalled forks, thereby inhibiting homologous recombination and preventing excessive recombination. Ubiquitination and DNA helicase activities are essential for controlling rhp51-dependent recombination in the absence of rad22. Plays a role in the processing of toxic recombination intermediates. Promotes proper chromosome segregation. This is F-box DNA helicase protein 1 (fbh1) from Schizosaccharomyces pombe (strain 972 / ATCC 24843) (Fission yeast).